The following is a 310-amino-acid chain: MTGPHPETESSGNRQISVAELLARQGVTGAPARRRRRRRGDSDAITVAELTGEIPIIRDDHHHAGPDAHASQSPAANGRVQVGEAAPQSPAEPVAEQVAEEPTRTVYWSQPEPRWPKSPPQDRRESGPELSEYPRPLRHTHSDRAPAGPPSGAEHMSPDPVEHYPDLWVDVLDTEVGEAEAETEVREAQPGRGERHAAAAAAGTDVEGDGAAEARVARRALDVVPTLWRGALVVLQSILAVAFGAGLFIAFDQLWRWNSIVALVLSVMVILGLVVSVRAVRKTEDIASTLIAVAVGALITLGPLALLQSG.

Disordered regions lie at residues 22–163 (LARQ…PVEH) and 178–209 (EAEA…VEGD). Composition is skewed to basic and acidic residues over residues 56-66 (IIRDDHHHAGP) and 183-197 (TEVR…ERHA). Low complexity predominate over residues 198–209 (AAAAAGTDVEGD). A run of 3 helical transmembrane segments spans residues 231–251 (ALVV…FIAF), 257–277 (WNSI…VVSV), and 286–306 (IAST…PLAL).

To M.leprae ML2433.

Its subcellular location is the cell membrane. This is an uncharacterized protein from Mycobacterium tuberculosis (strain CDC 1551 / Oshkosh).